A 142-amino-acid chain; its full sequence is RNA polymerase-binding transcription factor DksA (142 aa).

Disordered regions lie at residues 1–20 (MQTA…EDEP), 51–70 (HLQK…SSET), and 119–142 (RPTA…HRDD). A dksA C4-type zinc finger spans residues 104-128 (CEETGEPIGLARLEARPTATMSVEA). Residues 128–142 (AQERHERRERVHRDD) show a composition bias toward basic and acidic residues.

The protein belongs to the DksA family. As to quaternary structure, interacts directly with the RNA polymerase.

Its subcellular location is the cytoplasm. Transcription factor that acts by binding directly to the RNA polymerase (RNAP). Required for negative regulation of rRNA expression and positive regulation of several amino acid biosynthesis promoters. In Caulobacter vibrioides (strain ATCC 19089 / CIP 103742 / CB 15) (Caulobacter crescentus), this protein is RNA polymerase-binding transcription factor DksA.